The primary structure comprises 418 residues: MRFSGSPSPGPSNSSRWWPLDAGDANTSGDLAGLGEDGGPQADTRNEELAKLEIAVLAVIFVVAVLGNSSVLLALHRTPRKTSRMHLFIRHLSLADLAVAFFQVLPQLGWDITYRFRGPDGLCRVVKHMQVFAMFASAYMLVVMTADRYIAVCHPLKTLQQPARRSRLMIAAAWVLSFVLSTPQYFVFSMVEVSNVTKTYDCWANFIHPWGLPAYVTWMTGSVFVAPVVILGTCYGFICYHIWRKVRGKTAGRQGGPAEGAGESALYRGVLHARCVSSVKTISRAKIRTVKMTFVIVTAYIVCWAPFFIIQMWSAWDKNFSWVESENPATAIPALLASLNSCCNPWIYMFFSGHLLQDCAQSFPCCQNVKRTFTREGSDSMSRRQTSFTNNRSPTNSMGTWKDSPKSSKSIKFIPVST.

Low complexity predominate over residues 1 to 15 (MRFSGSPSPGPSNSS). The disordered stretch occupies residues 1–20 (MRFSGSPSPGPSNSSRWWPL). Over 1–51 (MRFSGSPSPGPSNSSRWWPLDAGDANTSGDLAGLGEDGGPQADTRNEELAK) the chain is Extracellular. N-linked (GlcNAc...) asparagine glycosylation is found at Asn13 and Asn26. The helical transmembrane segment at 52-75 (LEIAVLAVIFVVAVLGNSSVLLAL) threads the bilayer. The Cytoplasmic portion of the chain corresponds to 76 to 87 (HRTPRKTSRMHL). A helical transmembrane segment spans residues 88–109 (FIRHLSLADLAVAFFQVLPQLG). Over 110–124 (WDITYRFRGPDGLCR) the chain is Extracellular. Residues Cys123 and Cys202 are joined by a disulfide bond. Residues 125–146 (VVKHMQVFAMFASAYMLVVMTA) traverse the membrane as a helical segment. Over 147–167 (DRYIAVCHPLKTLQQPARRSR) the chain is Cytoplasmic. A helical transmembrane segment spans residues 168-189 (LMIAAAWVLSFVLSTPQYFVFS). The Extracellular segment spans residues 190-217 (MVEVSNVTKTYDCWANFIHPWGLPAYVT). An N-linked (GlcNAc...) asparagine glycan is attached at Asn195. A helical transmembrane segment spans residues 218–238 (WMTGSVFVAPVVILGTCYGFI). Topologically, residues 239–293 (CYHIWRKVRGKTAGRQGGPAEGAGESALYRGVLHARCVSSVKTISRAKIRTVKMT) are cytoplasmic. A helical transmembrane segment spans residues 294 to 313 (FVIVTAYIVCWAPFFIIQMW). Over 314–331 (SAWDKNFSWVESENPATA) the chain is Extracellular. N-linked (GlcNAc...) asparagine glycosylation occurs at Asn319. The chain crosses the membrane as a helical span at residues 332 to 351 (IPALLASLNSCCNPWIYMFF). The Cytoplasmic segment spans residues 352–418 (SGHLLQDCAQ…KSIKFIPVST (67 aa)). 2 S-palmitoyl cysteine lipidation sites follow: Cys365 and Cys366. Residues 377 to 418 (GSDSMSRRQTSFTNNRSPTNSMGTWKDSPKSSKSIKFIPVST) are disordered. Residues 383–399 (RRQTSFTNNRSPTNSMG) show a composition bias toward polar residues. A Phosphoserine modification is found at Ser404.

This sequence belongs to the G-protein coupled receptor 1 family. Vasopressin/oxytocin receptor subfamily.

It localises to the cell membrane. In terms of biological role, receptor for arginine vasopressin. The activity of this receptor is mediated by G proteins which activate a phosphatidyl-inositol-calcium second messenger system. This chain is Vasopressin V1a receptor (AVPR1A), found in Ovis aries (Sheep).